The following is a 165-amino-acid chain: Anaphase-promoting complex subunit 11 (165 aa).

The segment at 52 to 95 (CPSCKFPGDQCPLVIGLCHHNFHDHCIYRWLDTPTSKGLCPMCR) adopts an RING-type; atypical zinc-finger fold.

The APC/C is composed of at least 13 subunits that stay tightly associated throughout the cell cycle: APC1, APC2, APC4, APC5, APC9, APC11, CDC16, CDC23, CDC26, CDC27, DOC1, MND2 and SWM1.

It functions in the pathway protein modification; protein ubiquitination. In terms of biological role, probably catalytic subunit of the anaphase promoting complex/cyclosome (APC/C), a cell cycle-regulated E3 ubiquitin-protein ligase complex that controls progression through mitosis and the G1 phase of the cell cycle. The APC/C is thought to confer substrate specificity and, in the presence of ubiquitin-conjugating E2 enzymes, it catalyzes the formation of protein-ubiquitin conjugates that are subsequently degraded by the 26S proteasome. In early mitosis, the APC/C is activated by CDC20 and targets securin PDS1, the B-type cyclin CLB5, and other anaphase inhibitory proteins for proteolysis, thereby triggering the separation of sister chromatids at the metaphase-to-anaphase transition. In late mitosis and in G1, degradation of CLB5 allows activation of the APC/C by CDH1, which is needed to destroy CDC20 and the B-type cyclin CLB2 to allow exit from mitosis and creating the low CDK state necessary for cytokinesis and for reforming prereplicative complexes in G1 prior to another round of replication. APC11 is required to recruit the ubiquitin-conjugating enzyme E2 to the APC/C. The protein is Anaphase-promoting complex subunit 11 (APC11) of Saccharomyces cerevisiae (strain ATCC 204508 / S288c) (Baker's yeast).